The primary structure comprises 1044 residues: Isoleucine--tRNA ligase (1044 aa).

The 'HIGH' region motif lies at 48-58 (PFATGLPHFGH). A 'KMSKS' region motif is present at residues 594 to 598 (KMSKS). Residue lysine 597 participates in ATP binding.

It belongs to the class-I aminoacyl-tRNA synthetase family. IleS type 2 subfamily. Monomer. Requires Zn(2+) as cofactor.

The protein resides in the cytoplasm. The catalysed reaction is tRNA(Ile) + L-isoleucine + ATP = L-isoleucyl-tRNA(Ile) + AMP + diphosphate. Its function is as follows. Catalyzes the attachment of isoleucine to tRNA(Ile). As IleRS can inadvertently accommodate and process structurally similar amino acids such as valine, to avoid such errors it has two additional distinct tRNA(Ile)-dependent editing activities. One activity is designated as 'pretransfer' editing and involves the hydrolysis of activated Val-AMP. The other activity is designated 'posttransfer' editing and involves deacylation of mischarged Val-tRNA(Ile). The polypeptide is Isoleucine--tRNA ligase (Borrelia recurrentis (strain A1)).